The sequence spans 243 residues: MKAARQQAIVDLLLNHTSLTTEALSEQLKVSKETIRRDLNELQTQGKILRNHGRAKYIHRQNQDSGDPFHIRLKSHYAHKADIAREALAWIEEGMVIALDASSTCWYLARQLPDINIQVFTNSHPICHELGKRERIQLISSGGTLERKYGCYVNPSLISQLKSLEIDLFIFSCEGIDSSGALWDSNAINADYKSMLLKRAAQSLLLIDKSKFNRSGEARIGHLDEVTHIISDERQVATSLVTA.

Residues 1–57 (MKAARQQAIVDLLLNHTSLTTEALSEQLKVSKETIRRDLNELQTQGKILRNHGRAKY) enclose the HTH deoR-type domain. Positions 19-38 (LTTEALSEQLKVSKETIRRD) form a DNA-binding region, H-T-H motif.

Functionally, transcriptional activator of the fuc operon. In Escherichia coli (strain K12), this protein is L-fucose operon activator (fucR).